Consider the following 244-residue polypeptide: DNA repair protein RecO (244 aa).

Belongs to the RecO family.

Its function is as follows. Involved in DNA repair and RecF pathway recombination. This is DNA repair protein RecO from Myxococcus xanthus (strain DK1622).